Reading from the N-terminus, the 252-residue chain is Putative phosphonates utilization ATP-binding protein PhnK (252 aa).

Residues 6–246 (LSVNNLTHLY…PHHPYTQLLV (241 aa)) form the ABC transporter domain. An ATP-binding site is contributed by 38 to 45 (GESGSGKT).

Belongs to the ABC transporter superfamily. As to quaternary structure, forms a complex with PhnG, PhnH, PhnI and PhnJ with the suggested composition PhnG(4)H(2)I(2)J(2)K.

Functionally, belongs to an operon involved in alkylphosphonate uptake and C-P lyase. Exact function not known. PhnK is not required for the ribophosphonate triphosphate (RPnTP) synthase reaction. The sequence is that of Putative phosphonates utilization ATP-binding protein PhnK (phnK) from Escherichia coli (strain K12).